The sequence spans 186 residues: Peptidyl-tRNA hydrolase (186 aa).

A tRNA-binding site is contributed by Y14. The active-site Proton acceptor is H19. The tRNA site is built by F65, N67, and N113.

The protein belongs to the PTH family. In terms of assembly, monomer.

It localises to the cytoplasm. It carries out the reaction an N-acyl-L-alpha-aminoacyl-tRNA + H2O = an N-acyl-L-amino acid + a tRNA + H(+). In terms of biological role, hydrolyzes ribosome-free peptidyl-tRNAs (with 1 or more amino acids incorporated), which drop off the ribosome during protein synthesis, or as a result of ribosome stalling. Its function is as follows. Catalyzes the release of premature peptidyl moieties from peptidyl-tRNA molecules trapped in stalled 50S ribosomal subunits, and thus maintains levels of free tRNAs and 50S ribosomes. The sequence is that of Peptidyl-tRNA hydrolase from Limosilactobacillus fermentum (strain NBRC 3956 / LMG 18251) (Lactobacillus fermentum).